The following is a 105-amino-acid chain: Large ribosomal subunit protein uL24 (105 aa).

The protein belongs to the universal ribosomal protein uL24 family. Part of the 50S ribosomal subunit.

Functionally, one of two assembly initiator proteins, it binds directly to the 5'-end of the 23S rRNA, where it nucleates assembly of the 50S subunit. Its function is as follows. One of the proteins that surrounds the polypeptide exit tunnel on the outside of the subunit. This is Large ribosomal subunit protein uL24 from Clostridium botulinum (strain Langeland / NCTC 10281 / Type F).